The chain runs to 229 residues: 5'-methylthioadenosine/S-adenosylhomocysteine nucleosidase (229 aa).

Residue Glu-12 is the Proton acceptor of the active site. Substrate is bound by residues Gly-78, Ile-152, and 173–174; that span reads ME. The Proton donor role is filled by Asp-197.

Belongs to the PNP/UDP phosphorylase family. MtnN subfamily.

The enzyme catalyses S-adenosyl-L-homocysteine + H2O = S-(5-deoxy-D-ribos-5-yl)-L-homocysteine + adenine. It catalyses the reaction S-methyl-5'-thioadenosine + H2O = 5-(methylsulfanyl)-D-ribose + adenine. It carries out the reaction 5'-deoxyadenosine + H2O = 5-deoxy-D-ribose + adenine. The protein operates within amino-acid biosynthesis; L-methionine biosynthesis via salvage pathway; S-methyl-5-thio-alpha-D-ribose 1-phosphate from S-methyl-5'-thioadenosine (hydrolase route): step 1/2. Functionally, catalyzes the irreversible cleavage of the glycosidic bond in both 5'-methylthioadenosine (MTA) and S-adenosylhomocysteine (SAH/AdoHcy) to adenine and the corresponding thioribose, 5'-methylthioribose and S-ribosylhomocysteine, respectively. Also cleaves 5'-deoxyadenosine, a toxic by-product of radical S-adenosylmethionine (SAM) enzymes, into 5-deoxyribose and adenine. The protein is 5'-methylthioadenosine/S-adenosylhomocysteine nucleosidase of Pasteurella multocida (strain Pm70).